Reading from the N-terminus, the 80-residue chain is Cell division activator CedA (80 aa).

Belongs to the CedA family.

Its function is as follows. Activates the cell division inhibited by chromosomal DNA over-replication. This Escherichia coli O139:H28 (strain E24377A / ETEC) protein is Cell division activator CedA.